The following is a 157-amino-acid chain: SsrA-binding protein (157 aa).

Belongs to the SmpB family.

It localises to the cytoplasm. Required for rescue of stalled ribosomes mediated by trans-translation. Binds to transfer-messenger RNA (tmRNA), required for stable association of tmRNA with ribosomes. tmRNA and SmpB together mimic tRNA shape, replacing the anticodon stem-loop with SmpB. tmRNA is encoded by the ssrA gene; the 2 termini fold to resemble tRNA(Ala) and it encodes a 'tag peptide', a short internal open reading frame. During trans-translation Ala-aminoacylated tmRNA acts like a tRNA, entering the A-site of stalled ribosomes, displacing the stalled mRNA. The ribosome then switches to translate the ORF on the tmRNA; the nascent peptide is terminated with the 'tag peptide' encoded by the tmRNA and targeted for degradation. The ribosome is freed to recommence translation, which seems to be the essential function of trans-translation. In Methylobacterium nodulans (strain LMG 21967 / CNCM I-2342 / ORS 2060), this protein is SsrA-binding protein.